A 607-amino-acid chain; its full sequence is Aspartate--tRNA(Asp/Asn) ligase (607 aa).

Position 194 (glutamate 194) interacts with L-aspartate. The aspartate stretch occupies residues glutamine 218–lysine 221. L-aspartate is bound at residue arginine 240. ATP contacts are provided by residues arginine 240–glutamate 242 and glutamine 249. Histidine 468 lines the L-aspartate pocket. Glutamate 502 contacts ATP. Arginine 509 contributes to the L-aspartate binding site. Glycine 554–arginine 557 provides a ligand contact to ATP.

Belongs to the class-II aminoacyl-tRNA synthetase family. Type 1 subfamily. As to quaternary structure, homodimer.

It localises to the cytoplasm. The enzyme catalyses tRNA(Asx) + L-aspartate + ATP = L-aspartyl-tRNA(Asx) + AMP + diphosphate. In terms of biological role, aspartyl-tRNA synthetase with relaxed tRNA specificity since it is able to aspartylate not only its cognate tRNA(Asp) but also tRNA(Asn). Reaction proceeds in two steps: L-aspartate is first activated by ATP to form Asp-AMP and then transferred to the acceptor end of tRNA(Asp/Asn). This Desulfotalea psychrophila (strain LSv54 / DSM 12343) protein is Aspartate--tRNA(Asp/Asn) ligase.